A 344-amino-acid chain; its full sequence is Protein BIM1 (344 aa).

S2 carries the post-translational modification N-acetylserine. The Calponin-homology (CH) domain occupies 6 to 107; it reads GESRTELLTW…FLQWLKKHWI (102 aa). The interval 126-173 is disordered; the sequence is IITNNSATKPRTVSNPTTAKRSSSTGTGSAMSGGLATRHSSLGINGSR. A compositionally biased stretch (polar residues) spans 127 to 146; that stretch reads ITNNSATKPRTVSNPTTAKR. The segment covering 147–159 has biased composition (low complexity); it reads SSSTGTGSAMSGG. Phosphoserine is present on S157. Polar residues predominate over residues 163 to 173; sequence RHSSLGINGSR. The EB1 C-terminal domain occupies 188-281; the sequence is ELTKSQETIG…LYATAEGFEM (94 aa). Residues 292 to 312 form a disordered region; sequence NLGEHGTVPNQGGYANSNGEV.

This sequence belongs to the MAPRE family.

It is found in the cytoplasm. It localises to the cytoskeleton. Its function is as follows. Binds microtubules. This Saccharomyces cerevisiae (strain ATCC 204508 / S288c) (Baker's yeast) protein is Protein BIM1 (BIM1).